Here is a 505-residue protein sequence, read N- to C-terminus: Proton-coupled zinc antiporter SLC30A1 (505 aa).

Residues Met1–Arg10 are Cytoplasmic-facing. The helical transmembrane segment at Leu11–Val31 threads the bilayer. Residues Thr32 to Leu35 are Extracellular-facing. Residues Ala36–Val56 traverse the membrane as a helical segment. His43 and Asp47 together coordinate Zn(2+). The Cytoplasmic segment spans residues Ala57–Met80. Residues Gly81–Ile101 traverse the membrane as a helical segment. Residues Glu102–Pro113 lie on the Extracellular side of the membrane. The chain crosses the membrane as a helical span at residues Leu114–Phe134. Over His135 to Val246 the chain is Cytoplasmic. The disordered stretch occupies residues Gln142 to Thr215. Residues Thr187–Gly199 are compositionally biased toward polar residues. The span at Asp203 to Asp214 shows a compositional bias: basic and acidic residues. Residues Phe247 to Phe267 form a helical membrane-spanning segment. Zn(2+) is bound by residues His249 and Asp253. Over Tyr268–Ala306 the chain is Extracellular. A glycan (N-linked (GlcNAc...) asparagine) is linked at Asn297. A helical membrane pass occupies residues Gly307–Leu327. The Cytoplasmic portion of the chain corresponds to Tyr328–Leu505. At Ser504 the chain carries Phosphoserine.

The protein belongs to the cation diffusion facilitator (CDF) transporter (TC 2.A.4) family. SLC30A subfamily. In terms of assembly, homodimer. Interacts with TMEM163. Interacts and forms a complex with TMC6 and TMC8; the interaction regulates zinc transport into the ER.

It is found in the cell membrane. The protein localises to the basolateral cell membrane. Its subcellular location is the cytoplasmic vesicle membrane. It localises to the cytoplasm. The protein resides in the endoplasmic reticulum membrane. It is found in the golgi apparatus membrane. The protein localises to the nucleus membrane. The enzyme catalyses Zn(2+)(in) + 2 H(+)(out) = Zn(2+)(out) + 2 H(+)(in). In terms of biological role, zinc ion:proton antiporter that could function at the plasma membrane mediating zinc efflux from cells against its electrochemical gradient protecting them from intracellular zinc accumulation and toxicity. Alternatively, could prevent the transport to the plasma membrane of CACNB2, the L-type calcium channels regulatory subunit, through a yet to be defined mechanism. By modulating the expression of these channels at the plasma membrane, could prevent calcium and zinc influx into cells. By the same mechanism, could also prevent L-type calcium channels-mediated heavy metal influx into cells. In some cells, could also function as a zinc ion:proton antiporter mediating zinc entry into the lumen of cytoplasmic vesicles. In macrophages, can increase zinc ions concentration into the lumen of cytoplasmic vesicles containing engulfed bacteria and could help inactivate them. Forms a complex with TMC6/EVER1 and TMC8/EVER2 at the ER membrane of keratynocytes which facilitates zinc uptake into the ER. Down-regulates the activity of transcription factors induced by zinc and cytokines. The sequence is that of Proton-coupled zinc antiporter SLC30A1 from Macaca fascicularis (Crab-eating macaque).